A 318-amino-acid chain; its full sequence is Pantothenate kinase (318 aa).

96 to 103 (GSVAVGKS) contacts ATP.

Belongs to the prokaryotic pantothenate kinase family.

It is found in the cytoplasm. The catalysed reaction is (R)-pantothenate + ATP = (R)-4'-phosphopantothenate + ADP + H(+). It functions in the pathway cofactor biosynthesis; coenzyme A biosynthesis; CoA from (R)-pantothenate: step 1/5. The chain is Pantothenate kinase from Afipia carboxidovorans (strain ATCC 49405 / DSM 1227 / KCTC 32145 / OM5) (Oligotropha carboxidovorans).